Reading from the N-terminus, the 44-residue chain is Alpha-amylase inhibitor helianthamide (44 aa).

Intrachain disulfides connect Cys-6–Cys-38, Cys-16–Cys-33, and Cys-20–Cys-39. The interval Tyr-7–His-10 is inhibitory motif.

This sequence belongs to the sea anemone alpha-amylase inhibitor family.

It localises to the secreted. Specific pancreatic alpha-amylase (AMY2A) inhibitor. The recombinant peptide inhibits human pancreatic (Ki=0.01 nM) and porcine pancreatic alpha-amylases (Ki=0.1 nM). This chain is Alpha-amylase inhibitor helianthamide, found in Stichodactyla helianthus (Sun anemone).